Consider the following 60-residue polypeptide: Small ribosomal subunit protein bS21 (60 aa).

Belongs to the bacterial ribosomal protein bS21 family.

This is Small ribosomal subunit protein bS21 (rpsU) from Mycoplasma pneumoniae (strain ATCC 29342 / M129 / Subtype 1) (Mycoplasmoides pneumoniae).